The sequence spans 59 residues: MAEHRGGSGNFAEDREKASDAGRKGGQHSGGNFKNDPQRASEAGKKGGQQSGGNKSGKS.

Basic and acidic residues-rich tracts occupy residues 1 to 23 (MAEHRGGSGNFAEDREKASDAGR) and 36 to 45 (DPQRASEAGK). The disordered stretch occupies residues 1–59 (MAEHRGGSGNFAEDREKASDAGRKGGQHSGGNFKNDPQRASEAGKKGGQQSGGNKSGKS). Gly residues predominate over residues 46–59 (KGGQQSGGNKSGKS).

This sequence belongs to the con-10 family.

This is an uncharacterized protein from Escherichia coli (strain K12).